The following is a 47-amino-acid chain: Photosystem II reaction center protein K (47 aa).

The propeptide occupies 1-10 (MAPLTLDLLA). A helical membrane pass occupies residues 26 to 46 (LPLIPLLFFLLVFVWQAAVGF).

It belongs to the PsbK family. PSII is composed of 1 copy each of membrane proteins PsbA, PsbB, PsbC, PsbD, PsbE, PsbF, PsbH, PsbI, PsbJ, PsbK, PsbL, PsbM, PsbT, PsbX, PsbY, Psb30/Ycf12, peripheral proteins PsbO, CyanoQ (PsbQ), PsbU, PsbV and a large number of cofactors. It forms dimeric complexes.

The protein resides in the cellular thylakoid membrane. One of the components of the core complex of photosystem II (PSII). PSII is a light-driven water:plastoquinone oxidoreductase that uses light energy to abstract electrons from H(2)O, generating O(2) and a proton gradient subsequently used for ATP formation. It consists of a core antenna complex that captures photons, and an electron transfer chain that converts photonic excitation into a charge separation. In Prochlorococcus marinus (strain SARG / CCMP1375 / SS120), this protein is Photosystem II reaction center protein K.